Reading from the N-terminus, the 84-residue chain is Small ribosomal subunit protein uS17 (84 aa).

It belongs to the universal ribosomal protein uS17 family. As to quaternary structure, part of the 30S ribosomal subunit.

One of the primary rRNA binding proteins, it binds specifically to the 5'-end of 16S ribosomal RNA. The sequence is that of Small ribosomal subunit protein uS17 from Ureaplasma parvum serovar 3 (strain ATCC 27815 / 27 / NCTC 11736).